The sequence spans 202 residues: Putative 5'(3')-deoxyribonucleotidase (202 aa).

The active-site Nucleophile is aspartate 22. Mg(2+) is bound by residues aspartate 22, aspartate 24, and aspartate 156. Aspartate 24 serves as the catalytic Proton donor.

It belongs to the 5'(3')-deoxyribonucleotidase family. Mg(2+) is required as a cofactor.

In terms of biological role, dephosphorylates the 5' and 2'(3')-phosphates of deoxyribonucleotides. This Chlorobaculum tepidum (strain ATCC 49652 / DSM 12025 / NBRC 103806 / TLS) (Chlorobium tepidum) protein is Putative 5'(3')-deoxyribonucleotidase.